The chain runs to 440 residues: 5-hydroxytryptamine receptor 6 (440 aa).

Residues 1–27 (MVPEPGPVNSSTPAWGPGPPPAPGGSG) are Extracellular-facing. N-linked (GlcNAc...) asparagine glycosylation occurs at Asn-9. Residues 28–52 (WVAAALCVVIVLTAAANSLLIALIC) traverse the membrane as a helical segment. At 53 to 62 (TQPALRNTSN) the chain is on the cytoplasmic side. A helical transmembrane segment spans residues 63–88 (FFLVSLFTSDLMVGLVVMPPAMLNAL). The Extracellular portion of the chain corresponds to 89–96 (YGRWVLAR). Residues 97-122 (GLCLLWTAFDVMCCSASILNLCLISL) form a helical membrane-spanning segment. A disulfide bridge links Cys-99 with Cys-180. Serotonin is bound at residue Asp-106. Residues 123 to 142 (DRYLLILSPLRYKLRMTAPR) are Cytoplasmic-facing. The helical transmembrane segment at 143–167 (ALALILGAWSLAALASFLPLLLGWH) threads the bilayer. Residues 168–185 (ELGKARTSAPGQCRLLAS) lie on the Extracellular side of the membrane. Residues 186 to 209 (LPYVLVASGVTFFLPSGAICFTYC) traverse the membrane as a helical segment. At 210-268 (RILLAARKQAVQVASLTTGTATAGQALETLQVPRTPRPGMESADSRRLTTKHSRKALKA) the chain is on the cytoplasmic side. A helical membrane pass occupies residues 269 to 295 (SLTLGILLSMFFVTWLPFFVASIAQAV). Over 296 to 301 (CDCISP) the chain is Extracellular. The helical transmembrane segment at 302-325 (GLFDVLTWLGYCNSTMNPIIYPLF) threads the bilayer. Residues 326-440 (MRDFKRALGR…RQHPLGSPMN (115 aa)) are Cytoplasmic-facing.

The protein belongs to the G-protein coupled receptor 1 family. As to quaternary structure, interacts with CDK5. Interacts with MTOR. Interacts with RPTOR and NF1.

The protein resides in the cell membrane. In terms of biological role, G-protein coupled receptor for 5-hydroxytryptamine (serotonin), a biogenic hormone that functions as a neurotransmitter, a hormone and a mitogen. Also has a high affinity for tricyclic psychotropic drugs. Ligand binding causes a conformation change that triggers signaling via guanine nucleotide-binding proteins (G proteins) and modulates the activity of downstream effectors. HTR6 is coupled to G(s) G alpha proteins and mediates activation of adenylate cyclase activity. Controls pyramidal neurons migration during corticogenesis, through the regulation of CDK5 activity. Is an activator of mTOR signaling. The sequence is that of 5-hydroxytryptamine receptor 6 from Mus musculus (Mouse).